The chain runs to 933 residues: Dual 3',5'-cyclic-AMP and -GMP phosphodiesterase 11A (933 aa).

The segment at histidine 42 to phenylalanine 125 is disordered. 3 positions are modified to phosphoserine: serine 162, serine 163, and serine 239. GAF domains lie at aspartate 217 to isoleucine 370 and aspartate 402 to isoleucine 558. Residue serine 424 participates in 3',5'-cyclic GMP binding. A PDEase domain is found at serine 588 to arginine 912. Histidine 664 functions as the Proton donor in the catalytic mechanism. 4 residues coordinate a divalent metal cation: histidine 668, histidine 704, aspartate 705, and aspartate 816.

Belongs to the cyclic nucleotide phosphodiesterase family. Requires a divalent metal cation as cofactor. In terms of tissue distribution, isoform 1 is present in prostate, pituitary, heart and liver. It is however not present in testis nor in penis, suggesting that weak inhibition by Tadalafil (Cialis) is not relevant (at protein level). Isoform 2 may be expressed in testis. Isoform 4 is expressed in adrenal cortex.

It is found in the cytoplasm. Its subcellular location is the cytosol. The enzyme catalyses 3',5'-cyclic GMP + H2O = GMP + H(+). The catalysed reaction is 3',5'-cyclic AMP + H2O = AMP + H(+). Inhibited by 3-isobutyl-1-methylxanthine (IBMX), zaprinast and dipyridamole. cGMP acts as an allosteric activator. Weakly inhibited by Sildenafil (Viagra) and Tadalafil (Cialis); however, the fact that the protein is probably absent from testis, suggests that it is not biologically relevant and is not related with erectile dysfunction. In terms of biological role, plays a role in signal transduction by regulating the intracellular concentration of cyclic nucleotides cAMP and cGMP. Catalyzes the hydrolysis of both cAMP and cGMP to 5'-AMP and 5'-GMP, respectively. This is Dual 3',5'-cyclic-AMP and -GMP phosphodiesterase 11A from Homo sapiens (Human).